A 249-amino-acid polypeptide reads, in one-letter code: Proteasome subunit alpha type-3 (249 aa).

S2 carries the N-acetylserine modification. S214 and S220 each carry O-acetylserine. A Glycyl lysine isopeptide (Lys-Gly) (interchain with G-Cter in ubiquitin) cross-link involves residue K221.

It belongs to the peptidase T1A family. In terms of assembly, component of the 20S core complex of the 26S proteasome. The 26S proteasome is composed of a core protease (CP), known as the 20S proteasome, capped at one or both ends by the 19S regulatory particle (RP/PA700). The 20S proteasome core is composed of 28 subunits that are arranged in four stacked rings, resulting in a barrel-shaped structure. The two end rings are each formed by seven alpha subunits, and the two central rings are each formed by seven beta subunits. The catalytic chamber with the active sites is on the inside of the barrel. Ubiquitous low levels.

The protein localises to the cytoplasm. The protein resides in the nucleus. In terms of biological role, the proteasome is a multicatalytic proteinase complex which is characterized by its ability to cleave peptides with Arg, Phe, Tyr, Leu, and Glu adjacent to the leaving group at neutral or slightly basic pH. The proteasome has an ATP-dependent proteolytic activity. The protein is Proteasome subunit alpha type-3 (PAG1) of Arabidopsis thaliana (Mouse-ear cress).